The primary structure comprises 219 residues: 2-hydroxy-3-keto-5-methylthiopentenyl-1-phosphate phosphatase (219 aa).

Belongs to the HAD-like hydrolase superfamily. MtnX family.

The catalysed reaction is 2-hydroxy-5-methylsulfanyl-3-oxopent-1-enyl phosphate + H2O = 1,2-dihydroxy-5-(methylsulfanyl)pent-1-en-3-one + phosphate. It functions in the pathway amino-acid biosynthesis; L-methionine biosynthesis via salvage pathway; L-methionine from S-methyl-5-thio-alpha-D-ribose 1-phosphate: step 4/6. In terms of biological role, dephosphorylates 2-hydroxy-3-keto-5-methylthiopentenyl-1-phosphate (HK-MTPenyl-1-P) yielding 1,2-dihydroxy-3-keto-5-methylthiopentene (DHK-MTPene). The sequence is that of 2-hydroxy-3-keto-5-methylthiopentenyl-1-phosphate phosphatase from Bacillus thuringiensis (strain Al Hakam).